Here is a 427-residue protein sequence, read N- to C-terminus: Enolase 2 (427 aa).

Residue Gln-165 coordinates (2R)-2-phosphoglycerate. The active-site Proton donor is Glu-207. Residues Asp-244, Glu-287, and Asp-314 each contribute to the Mg(2+) site. 4 residues coordinate (2R)-2-phosphoglycerate: Lys-339, Arg-368, Ser-369, and Lys-390. Catalysis depends on Lys-339, which acts as the Proton acceptor.

The protein belongs to the enolase family. In terms of assembly, component of the RNA degradosome, a multiprotein complex involved in RNA processing and mRNA degradation. The cofactor is Mg(2+).

It localises to the cytoplasm. The protein localises to the secreted. The protein resides in the cell surface. It carries out the reaction (2R)-2-phosphoglycerate = phosphoenolpyruvate + H2O. It functions in the pathway carbohydrate degradation; glycolysis; pyruvate from D-glyceraldehyde 3-phosphate: step 4/5. Its function is as follows. Catalyzes the reversible conversion of 2-phosphoglycerate (2-PG) into phosphoenolpyruvate (PEP). It is essential for the degradation of carbohydrates via glycolysis. This Pseudomonas syringae pv. syringae (strain B728a) protein is Enolase 2.